The sequence spans 221 residues: MATSIDVVDLKGKKAGSIELPDSLFDVQTNIPLIHQVVTAQLAAARQGTHKTKNRGEVSGAGRKPFKQKGTGRARQGSIRAPQMTGGGIVHGPTPRDYSQRTPKKMIAAALLGALSDRARGSRIHAVQAFTAGEAPSTKAVVELLSGVATSKHVLVVLERDDELAFKSVRNIASVHALTYDQLNAYDVLVSDDIVFTQAALEGFIAAKSTSAATKKEEVNA.

Positions 45-100 (ARQGTHKTKNRGEVSGAGRKPFKQKGTGRARQGSIRAPQMTGGGIVHGPTPRDYSQ) are disordered.

This sequence belongs to the universal ribosomal protein uL4 family. Part of the 50S ribosomal subunit.

One of the primary rRNA binding proteins, this protein initially binds near the 5'-end of the 23S rRNA. It is important during the early stages of 50S assembly. It makes multiple contacts with different domains of the 23S rRNA in the assembled 50S subunit and ribosome. Functionally, forms part of the polypeptide exit tunnel. The protein is Large ribosomal subunit protein uL4 of Leifsonia xyli subsp. xyli (strain CTCB07).